We begin with the raw amino-acid sequence, 457 residues long: UDP-glycosyltransferase 72C1 (457 aa).

Residues Ser272, 343 to 344, 361 to 369, and 383 to 386 each bind UDP-alpha-D-glucose; these read WA, HCGWNSVLE, and YSEQ.

The protein belongs to the UDP-glycosyltransferase family.

The sequence is that of UDP-glycosyltransferase 72C1 (UGT72C1) from Arabidopsis thaliana (Mouse-ear cress).